The primary structure comprises 250 residues: 2,3-bisphosphoglycerate-dependent phosphoglycerate mutase (250 aa).

Substrate contacts are provided by residues 10 to 17, 23 to 24, Arg62, 89 to 92, Lys100, 116 to 117, and 185 to 186; these read RHGESQWN, TG, ERHY, RR, and GN. Catalysis depends on His11, which acts as the Tele-phosphohistidine intermediate. Catalysis depends on Glu89, which acts as the Proton donor/acceptor.

It belongs to the phosphoglycerate mutase family. BPG-dependent PGAM subfamily. As to quaternary structure, homodimer.

The enzyme catalyses (2R)-2-phosphoglycerate = (2R)-3-phosphoglycerate. It participates in carbohydrate degradation; glycolysis; pyruvate from D-glyceraldehyde 3-phosphate: step 3/5. Catalyzes the interconversion of 2-phosphoglycerate and 3-phosphoglycerate. The protein is 2,3-bisphosphoglycerate-dependent phosphoglycerate mutase of Salmonella dublin (strain CT_02021853).